A 269-amino-acid polypeptide reads, in one-letter code: Protein BASIC PENTACYSTEINE3 (269 aa).

The protein belongs to the BBR/BPC family. Expressed in seedlings, leaves and pistils. Detected in the base of flowers and tips of carpels, in petal vasculature, in anthers, in young rosette, in the lateral and primary roots, and in the gynobasal portion of the ovule.

The protein resides in the nucleus. Functionally, transcriptional regulator that specifically binds to GA-rich elements (GAGA-repeats) present in regulatory sequences of genes involved in developmental processes. This Arabidopsis thaliana (Mouse-ear cress) protein is Protein BASIC PENTACYSTEINE3 (BPC3).